The primary structure comprises 159 residues: Ribonuclease P protein component 2 (159 aa).

This sequence belongs to the eukaryotic/archaeal RNase P protein component 2 family. As to quaternary structure, consists of a catalytic RNA component and at least 4-5 protein subunits.

It is found in the cytoplasm. It catalyses the reaction Endonucleolytic cleavage of RNA, removing 5'-extranucleotides from tRNA precursor.. Functionally, part of ribonuclease P, a protein complex that generates mature tRNA molecules by cleaving their 5'-ends. The sequence is that of Ribonuclease P protein component 2 from Halorubrum lacusprofundi (strain ATCC 49239 / DSM 5036 / JCM 8891 / ACAM 34).